The sequence spans 212 residues: 3-isopropylmalate dehydratase small subunit (212 aa).

This sequence belongs to the LeuD family. LeuD type 1 subfamily. Heterodimer of LeuC and LeuD.

It catalyses the reaction (2R,3S)-3-isopropylmalate = (2S)-2-isopropylmalate. The protein operates within amino-acid biosynthesis; L-leucine biosynthesis; L-leucine from 3-methyl-2-oxobutanoate: step 2/4. Catalyzes the isomerization between 2-isopropylmalate and 3-isopropylmalate, via the formation of 2-isopropylmaleate. The polypeptide is 3-isopropylmalate dehydratase small subunit (Laribacter hongkongensis (strain HLHK9)).